The primary structure comprises 387 residues: Protein SGT1 homolog (387 aa).

TPR repeat units lie at residues Met-1–Ala-34, Ala-36–Asn-67, and Ser-68–Asn-101. Disordered stretches follow at residues Lys-110–Gly-193 and Ser-299–Leu-323. A compositionally biased stretch (low complexity) spans Asn-118–Pro-127. A compositionally biased stretch (pro residues) spans Thr-128 to Gln-138. Over residues Pro-139 to Thr-185 the composition is skewed to low complexity. The CS domain occupies Gly-193–Glu-282. Residues Ala-301 to Lys-387 enclose the SGS domain. Positions Ser-308 to Leu-323 are enriched in basic and acidic residues.

It belongs to the SGT1 family.

In terms of biological role, may play a role in ubiquitination and subsequent proteasomal degradation of target proteins. This chain is Protein SGT1 homolog (sugt1), found in Dictyostelium discoideum (Social amoeba).